The following is a 516-amino-acid chain: Putative glucosylceramidase 2 (516 aa).

The first 23 residues, 1–23 (MSIAWSCFVLGLFALASLQVALA), serve as a signal peptide directing secretion. E254 functions as the Proton donor in the catalytic mechanism. The active-site Nucleophile is E358.

The protein belongs to the glycosyl hydrolase 30 family.

The catalysed reaction is a beta-D-glucosylceramide + H2O = an N-acyl-sphingoid base + D-glucose. The enzyme catalyses a beta-D-glucosyl-(1&lt;-&gt;1')-N-acylsphing-4-enine + H2O = an N-acylsphing-4-enine + D-glucose. It carries out the reaction an N-acyl-1-beta-D-glucosyl-15-methylhexadecasphing-4-enine + H2O = an N-acyl-15-methylhexadecasphing-4-enine + D-glucose. It participates in lipid metabolism; sphingolipid metabolism. Functionally, glucosylceramidase that catalyzes the hydrolysis of glucosylceramides into free ceramides and glucose. C.elegans contain specific sphingoid bases, which are unique or different in structure compared to the sphingoid bases found in other animals. Two examples of these distinctive compounds are: 15-methylhexadecasphinganine and 15-methylhexadecasphing-4-enine. The protein is Putative glucosylceramidase 2 (gba-2) of Caenorhabditis elegans.